A 517-amino-acid chain; its full sequence is MSPLALVSVSDKKNIIPFCKELVEHFNYKILSSGGTAKHLIEAKIPVIKVADFTNSPEILGGRVKTLHPKIHGGILAIRTDEEHKKDIEANNLELIDLVVVNLYPFKKTVDGGAKWEDAIENIDIGGPSMIRSAAKNHKDVSVLVDSSQYQSFLEESKKGELKDSYKAKLALEAFQHTADYDTAISNWIRKERDLQSSKYIESYPLIKTLRYGENPHQKAFWYGLSNIGWNSAEQLQGKDLSYNNLLDLESALSTVLEFGYTEKDELATDMVASVILKHNNPCGASMSNSASKAFLNALECDSVSAFGGIVAFNSNVDSETAIHLKDIFLECVVAPSFDEEALEILKVKKNLRILKISKDQLPQKNQNSTKSIMGGLLVQDTDDSEEKTENWISVTNKNPSNQINLDLNFAWKICKHVKSNAIVIAKDQKTIGIGAGQMNRVGAAKIALKAAGRLCSDAVLASDGFFPFADTVEIANEYGIKAIIQPGGSLRDQESIDMCNSKGISMVFTQKRHFLH.

The MGS-like domain occupies 1–145 (MSPLALVSVS…KNHKDVSVLV (145 aa)).

Belongs to the PurH family.

The enzyme catalyses (6R)-10-formyltetrahydrofolate + 5-amino-1-(5-phospho-beta-D-ribosyl)imidazole-4-carboxamide = 5-formamido-1-(5-phospho-D-ribosyl)imidazole-4-carboxamide + (6S)-5,6,7,8-tetrahydrofolate. It catalyses the reaction IMP + H2O = 5-formamido-1-(5-phospho-D-ribosyl)imidazole-4-carboxamide. Its pathway is purine metabolism; IMP biosynthesis via de novo pathway; 5-formamido-1-(5-phospho-D-ribosyl)imidazole-4-carboxamide from 5-amino-1-(5-phospho-D-ribosyl)imidazole-4-carboxamide (10-formyl THF route): step 1/1. It participates in purine metabolism; IMP biosynthesis via de novo pathway; IMP from 5-formamido-1-(5-phospho-D-ribosyl)imidazole-4-carboxamide: step 1/1. The sequence is that of Bifunctional purine biosynthesis protein PurH from Prochlorococcus marinus (strain AS9601).